Consider the following 171-residue polypeptide: Endoribonuclease YbeY (171 aa).

Residues H130, H134, and H140 each contribute to the Zn(2+) site.

It belongs to the endoribonuclease YbeY family. It depends on Zn(2+) as a cofactor.

It localises to the cytoplasm. Functionally, single strand-specific metallo-endoribonuclease involved in late-stage 70S ribosome quality control and in maturation of the 3' terminus of the 16S rRNA. The polypeptide is Endoribonuclease YbeY (Neisseria meningitidis serogroup A / serotype 4A (strain DSM 15465 / Z2491)).